A 176-amino-acid chain; its full sequence is NAD(P)H-quinone oxidoreductase subunit 6, chloroplastic (176 aa).

Transmembrane regions (helical) follow at residues 10–30 (FLLV…VLLP), 32–52 (PIYS…FYIL), 61–81 (AQLL…VMFI), 92–112 (LWTV…VSLI), and 152–172 (FFLP…GAIA).

It belongs to the complex I subunit 6 family. NDH is composed of at least 16 different subunits, 5 of which are encoded in the nucleus.

Its subcellular location is the plastid. It is found in the chloroplast thylakoid membrane. The catalysed reaction is a plastoquinone + NADH + (n+1) H(+)(in) = a plastoquinol + NAD(+) + n H(+)(out). It catalyses the reaction a plastoquinone + NADPH + (n+1) H(+)(in) = a plastoquinol + NADP(+) + n H(+)(out). Functionally, NDH shuttles electrons from NAD(P)H:plastoquinone, via FMN and iron-sulfur (Fe-S) centers, to quinones in the photosynthetic chain and possibly in a chloroplast respiratory chain. The immediate electron acceptor for the enzyme in this species is believed to be plastoquinone. Couples the redox reaction to proton translocation, and thus conserves the redox energy in a proton gradient. This chain is NAD(P)H-quinone oxidoreductase subunit 6, chloroplastic (ndhG), found in Lactuca sativa (Garden lettuce).